Reading from the N-terminus, the 376-residue chain is Proton extrusion protein PxcA (376 aa).

The next 4 helical transmembrane spans lie at 150–170, 251–271, 299–319, and 334–354; these read TLISLKIILLLILVPLLVQQM, AVKNVLADIAALIAFAFVCII, IILFTDMFVGFHSPEGWQVLL, and FILLFIATFPVILATIFKYWI.

It belongs to the CemA family.

The protein resides in the cell inner membrane. Functionally, required for H(+) efflux immediately after light irradiation to form a rapid H(+) concentration gradient across the thylakoid membranes. Together with PxcL, contributes to transient H(+) uptake following dark to light transition. In Prochlorococcus marinus (strain MIT 9303), this protein is Proton extrusion protein PxcA.